We begin with the raw amino-acid sequence, 82 residues long: Small ribosomal subunit protein bS16 (82 aa).

This sequence belongs to the bacterial ribosomal protein bS16 family.

This chain is Small ribosomal subunit protein bS16, found in Serratia proteamaculans (strain 568).